The sequence spans 228 residues: Phosphoglycolate phosphatase (228 aa).

The Nucleophile role is filled by D12. Positions 12, 14, and 177 each coordinate Mg(2+).

It belongs to the HAD-like hydrolase superfamily. CbbY/CbbZ/Gph/YieH family. The cofactor is Mg(2+).

It catalyses the reaction 2-phosphoglycolate + H2O = glycolate + phosphate. Its pathway is organic acid metabolism; glycolate biosynthesis; glycolate from 2-phosphoglycolate: step 1/1. Specifically catalyzes the dephosphorylation of 2-phosphoglycolate. Is involved in the dissimilation of the intracellular 2-phosphoglycolate formed during the DNA repair of 3'-phosphoglycolate ends, a major class of DNA lesions induced by oxidative stress. The chain is Phosphoglycolate phosphatase from Vibrio vulnificus (strain CMCP6).